The sequence spans 238 residues: Large ribosomal subunit protein uL1 (238 aa).

It belongs to the universal ribosomal protein uL1 family. In terms of assembly, part of the 50S ribosomal subunit.

In terms of biological role, binds directly to 23S rRNA. The L1 stalk is quite mobile in the ribosome, and is involved in E site tRNA release. Its function is as follows. Protein L1 is also a translational repressor protein, it controls the translation of the L11 operon by binding to its mRNA. The polypeptide is Large ribosomal subunit protein uL1 (Rickettsia prowazekii (strain Madrid E)).